The following is a 168-amino-acid chain: Lipoprotein signal peptidase (168 aa).

3 helical membrane-spanning segments follow: residues 15–35 (AIAAVTVVLDQISKLWILGLL), 69–89 (WGRWLLIGFSILVVIGLAVWV), and 95–115 (PLLAVGIGLIIGGAIGNNLID). Catalysis depends on residues aspartate 124 and aspartate 141. The chain crosses the membrane as a helical span at residues 133 to 153 (FPWVFNIADSGISVGVALLLL).

It belongs to the peptidase A8 family.

It is found in the cell inner membrane. It catalyses the reaction Release of signal peptides from bacterial membrane prolipoproteins. Hydrolyzes -Xaa-Yaa-Zaa-|-(S,diacylglyceryl)Cys-, in which Xaa is hydrophobic (preferably Leu), and Yaa (Ala or Ser) and Zaa (Gly or Ala) have small, neutral side chains.. It participates in protein modification; lipoprotein biosynthesis (signal peptide cleavage). In terms of biological role, this protein specifically catalyzes the removal of signal peptides from prolipoproteins. The sequence is that of Lipoprotein signal peptidase from Caulobacter vibrioides (strain ATCC 19089 / CIP 103742 / CB 15) (Caulobacter crescentus).